Consider the following 555-residue polypeptide: CTP synthase (555 aa).

The interval 1-272 is amidoligase domain; that stretch reads MQPTSTTTKH…DAYVVRKLDL (272 aa). Ser-19 lines the CTP pocket. Ser-19 is a UTP binding site. ATP is bound by residues 20-25 and Asp-77; that span reads SLGKGL. Mg(2+) contacts are provided by Asp-77 and Glu-146. Residues 153–155, 193–198, and Lys-229 contribute to the CTP site; these read DIE and KTKPTQ. UTP is bound by residues 193 to 198 and Lys-229; that span reads KTKPTQ. The Glutamine amidotransferase type-1 domain occupies 297–548; the sequence is TVALVGKYID…VKAAVARQVA (252 aa). Gly-360 contacts L-glutamine. The Nucleophile; for glutamine hydrolysis role is filled by Cys-387. Residues 388 to 391, Glu-411, and Arg-473 contribute to the L-glutamine site; that span reads LGLQ. Residues His-521 and Glu-523 contribute to the active site.

It belongs to the CTP synthase family. As to quaternary structure, homotetramer.

The enzyme catalyses UTP + L-glutamine + ATP + H2O = CTP + L-glutamate + ADP + phosphate + 2 H(+). It catalyses the reaction L-glutamine + H2O = L-glutamate + NH4(+). It carries out the reaction UTP + NH4(+) + ATP = CTP + ADP + phosphate + 2 H(+). The protein operates within pyrimidine metabolism; CTP biosynthesis via de novo pathway; CTP from UDP: step 2/2. Its activity is regulated as follows. Allosterically activated by GTP, when glutamine is the substrate; GTP has no effect on the reaction when ammonia is the substrate. The allosteric effector GTP functions by stabilizing the protein conformation that binds the tetrahedral intermediate(s) formed during glutamine hydrolysis. Inhibited by the product CTP, via allosteric rather than competitive inhibition. Functionally, catalyzes the ATP-dependent amination of UTP to CTP with either L-glutamine or ammonia as the source of nitrogen. Regulates intracellular CTP levels through interactions with the four ribonucleotide triphosphates. This chain is CTP synthase, found in Streptomyces griseus subsp. griseus (strain JCM 4626 / CBS 651.72 / NBRC 13350 / KCC S-0626 / ISP 5235).